A 319-amino-acid chain; its full sequence is Iron-sulfur cluster transfer protein NUBPL (319 aa).

Residues 1–38 (MGTWRRLLLFGGVSLRGGGAATVPPRGCRALGCGRQLL) constitute a mitochondrion transit peptide. 75-82 (GKGGVGKS) is an ATP binding site.

The protein belongs to the Mrp/NBP35 ATP-binding proteins family. [4Fe-4S] cluster is required as a cofactor.

It localises to the mitochondrion. Iron-sulfur cluster transfer protein involved in the assembly of the mitochondrial membrane respiratory chain NADH dehydrogenase (Complex I). May deliver one or more Fe-S clusters to complex I subunits. This chain is Iron-sulfur cluster transfer protein NUBPL (Nubpl), found in Mus musculus (Mouse).